The chain runs to 378 residues: Probable E3 ubiquitin-protein ligase LUL3 (378 aa).

Over residues 1–21 (MGISLSKRRRDNNNNHHHPHH) the composition is skewed to basic residues. The interval 1 to 79 (MGISLSKRRR…PPSQISYRPY (79 aa)) is disordered. Gly-2 is lipidated: N-myristoyl glycine. Composition is skewed to pro residues over residues 29–38 (DPPPQQPPPQ) and 55–72 (SLPP…PPPS). The tract at residues 164–283 (FVFDALFDGS…GSFKVKVMKQ (120 aa)) is DAR2 domain. An RING-type; atypical zinc finger spans residues 321–360 (CVICLTEPKDTAVMPCRHLCLCSDCAEELRFQTNKCPICR).

Belongs to the RING-type zinc finger family. LOG2 subfamily. Post-translationally, myristoylated (in vitro).

The enzyme catalyses S-ubiquitinyl-[E2 ubiquitin-conjugating enzyme]-L-cysteine + [acceptor protein]-L-lysine = [E2 ubiquitin-conjugating enzyme]-L-cysteine + N(6)-ubiquitinyl-[acceptor protein]-L-lysine.. Its pathway is protein modification; protein ubiquitination. In terms of biological role, acts as an E3 ubiquitin-protein ligase, or as part of E3 complex, which accepts ubiquitin from specific E2 ubiquitin-conjugating enzymes and then transfers it to substrates (in vitro). The polypeptide is Probable E3 ubiquitin-protein ligase LUL3 (LUL3) (Arabidopsis thaliana (Mouse-ear cress)).